A 275-amino-acid chain; its full sequence is Hydroxyethylthiazole kinase (275 aa).

M50 is a substrate binding site. Residues R126 and S171 each contribute to the ATP site. Residue A200 coordinates substrate.

The protein belongs to the Thz kinase family. Mg(2+) serves as cofactor.

It catalyses the reaction 5-(2-hydroxyethyl)-4-methylthiazole + ATP = 4-methyl-5-(2-phosphooxyethyl)-thiazole + ADP + H(+). The protein operates within cofactor biosynthesis; thiamine diphosphate biosynthesis; 4-methyl-5-(2-phosphoethyl)-thiazole from 5-(2-hydroxyethyl)-4-methylthiazole: step 1/1. Functionally, catalyzes the phosphorylation of the hydroxyl group of 4-methyl-5-beta-hydroxyethylthiazole (THZ). This is Hydroxyethylthiazole kinase from Acinetobacter baumannii (strain SDF).